The chain runs to 242 residues: Phosphoribosyl isomerase A (242 aa).

The active-site Proton acceptor is aspartate 12. Aspartate 131 (proton donor) is an active-site residue.

This sequence belongs to the HisA/HisF family.

Its subcellular location is the cytoplasm. The catalysed reaction is 1-(5-phospho-beta-D-ribosyl)-5-[(5-phospho-beta-D-ribosylamino)methylideneamino]imidazole-4-carboxamide = 5-[(5-phospho-1-deoxy-D-ribulos-1-ylimino)methylamino]-1-(5-phospho-beta-D-ribosyl)imidazole-4-carboxamide. It carries out the reaction N-(5-phospho-beta-D-ribosyl)anthranilate = 1-(2-carboxyphenylamino)-1-deoxy-D-ribulose 5-phosphate. It functions in the pathway amino-acid biosynthesis; L-histidine biosynthesis; L-histidine from 5-phospho-alpha-D-ribose 1-diphosphate: step 4/9. It participates in amino-acid biosynthesis; L-tryptophan biosynthesis; L-tryptophan from chorismate: step 3/5. In terms of biological role, involved in both the histidine and tryptophan biosynthetic pathways. The chain is Phosphoribosyl isomerase A from Streptomyces avermitilis (strain ATCC 31267 / DSM 46492 / JCM 5070 / NBRC 14893 / NCIMB 12804 / NRRL 8165 / MA-4680).